Here is a 223-residue protein sequence, read N- to C-terminus: Deoxyribose-phosphate aldolase (223 aa).

Asp-91 acts as the Proton donor/acceptor in catalysis. Lys-153 serves as the catalytic Schiff-base intermediate with acetaldehyde. Lys-182 (proton donor/acceptor) is an active-site residue.

This sequence belongs to the DeoC/FbaB aldolase family. DeoC type 1 subfamily.

Its subcellular location is the cytoplasm. It carries out the reaction 2-deoxy-D-ribose 5-phosphate = D-glyceraldehyde 3-phosphate + acetaldehyde. The protein operates within carbohydrate degradation; 2-deoxy-D-ribose 1-phosphate degradation; D-glyceraldehyde 3-phosphate and acetaldehyde from 2-deoxy-alpha-D-ribose 1-phosphate: step 2/2. In terms of biological role, catalyzes a reversible aldol reaction between acetaldehyde and D-glyceraldehyde 3-phosphate to generate 2-deoxy-D-ribose 5-phosphate. The chain is Deoxyribose-phosphate aldolase from Streptococcus pyogenes serotype M2 (strain MGAS10270).